The primary structure comprises 89 residues: Small ribosomal subunit protein uS15 (89 aa).

Residues 1–11 (MSIAAERKAEV) show a composition bias toward basic and acidic residues. Residues 1 to 24 (MSIAAERKAEVIKTNATKAGDTGS) are disordered.

It belongs to the universal ribosomal protein uS15 family. As to quaternary structure, part of the 30S ribosomal subunit. Forms a bridge to the 50S subunit in the 70S ribosome, contacting the 23S rRNA.

Functionally, one of the primary rRNA binding proteins, it binds directly to 16S rRNA where it helps nucleate assembly of the platform of the 30S subunit by binding and bridging several RNA helices of the 16S rRNA. In terms of biological role, forms an intersubunit bridge (bridge B4) with the 23S rRNA of the 50S subunit in the ribosome. This chain is Small ribosomal subunit protein uS15, found in Bradyrhizobium diazoefficiens (strain JCM 10833 / BCRC 13528 / IAM 13628 / NBRC 14792 / USDA 110).